The sequence spans 462 residues: L-seryl-tRNA(Sec) selenium transferase (462 aa).

Position 293 is an N6-(pyridoxal phosphate)lysine (Lys293).

Belongs to the SelA family. It depends on pyridoxal 5'-phosphate as a cofactor.

It is found in the cytoplasm. The enzyme catalyses L-seryl-tRNA(Sec) + selenophosphate + H(+) = L-selenocysteinyl-tRNA(Sec) + phosphate. It functions in the pathway aminoacyl-tRNA biosynthesis; selenocysteinyl-tRNA(Sec) biosynthesis; selenocysteinyl-tRNA(Sec) from L-seryl-tRNA(Sec) (bacterial route): step 1/1. Converts seryl-tRNA(Sec) to selenocysteinyl-tRNA(Sec) required for selenoprotein biosynthesis. The sequence is that of L-seryl-tRNA(Sec) selenium transferase from Clostridium botulinum (strain 657 / Type Ba4).